The following is a 178-amino-acid chain: Large ribosomal subunit protein uL6 (178 aa).

This sequence belongs to the universal ribosomal protein uL6 family. As to quaternary structure, part of the 50S ribosomal subunit.

Its function is as follows. This protein binds to the 23S rRNA, and is important in its secondary structure. It is located near the subunit interface in the base of the L7/L12 stalk, and near the tRNA binding site of the peptidyltransferase center. This chain is Large ribosomal subunit protein uL6, found in Helicobacter pylori (strain G27).